The sequence spans 412 residues: Argininosuccinate synthase (412 aa).

ATP-binding positions include 20-28 (AYSGGLDTS) and Ala-48. 2 residues coordinate L-citrulline: Tyr-100 and Ser-105. ATP is bound at residue Gly-130. Residues Thr-132, Asn-136, and Asp-137 each coordinate L-aspartate. Residue Asn-136 participates in L-citrulline binding. The L-citrulline site is built by Arg-140, Ser-189, Ser-198, Glu-274, and Tyr-286.

The protein belongs to the argininosuccinate synthase family. Type 1 subfamily. In terms of assembly, homotetramer.

Its subcellular location is the cytoplasm. The enzyme catalyses L-citrulline + L-aspartate + ATP = 2-(N(omega)-L-arginino)succinate + AMP + diphosphate + H(+). The protein operates within amino-acid biosynthesis; L-arginine biosynthesis; L-arginine from L-ornithine and carbamoyl phosphate: step 2/3. The polypeptide is Argininosuccinate synthase (Shewanella pealeana (strain ATCC 700345 / ANG-SQ1)).